We begin with the raw amino-acid sequence, 339 residues long: Probable thylakoid lumen protein sll0997 (339 aa).

The N-terminal stretch at 1–26 (MAPYQSFHIGLLGLALASVWPLSACA) is a signal peptide.

The protein localises to the cellular thylakoid lumen. In Synechocystis sp. (strain ATCC 27184 / PCC 6803 / Kazusa), this protein is Probable thylakoid lumen protein sll0997.